Here is an 84-residue protein sequence, read N- to C-terminus: RNA-binding protein Hfq (84 aa).

The region spanning 11–71 (DTFLNHVRKN…ISTIMPGHPV (61 aa)) is the Sm domain.

This sequence belongs to the Hfq family. Homohexamer.

Functionally, RNA chaperone that binds small regulatory RNA (sRNAs) and mRNAs to facilitate mRNA translational regulation in response to envelope stress, environmental stress and changes in metabolite concentrations. Also binds with high specificity to tRNAs. This Methylobacterium nodulans (strain LMG 21967 / CNCM I-2342 / ORS 2060) protein is RNA-binding protein Hfq.